A 216-amino-acid chain; its full sequence is Thymidine kinase (216 aa).

Residues 9-16 (GPMDSGKS) and 86-89 (DEAQ) each bind ATP. The active-site Proton acceptor is E87.

This sequence belongs to the thymidine kinase family. Homotetramer.

Its subcellular location is the cytoplasm. The catalysed reaction is thymidine + ATP = dTMP + ADP + H(+). This Cutibacterium acnes (strain DSM 16379 / KPA171202) (Propionibacterium acnes) protein is Thymidine kinase.